Here is a 128-residue protein sequence, read N- to C-terminus: Fluoride-specific ion channel FluC (128 aa).

A run of 4 helical transmembrane segments spans residues 1–21, 45–65, 70–90, and 99–119; these read MPERYAALLLVGAGGFVGATA, LAGCFLIGFISQLSVSSSLVS, LLLATGFCGGFTTFSSYMYEI, and IFYSTLYLLGSIVGGILCLYF. The Na(+) site is built by Gly-78 and Thr-81.

The protein belongs to the fluoride channel Fluc/FEX (TC 1.A.43) family.

Its subcellular location is the cell inner membrane. The enzyme catalyses fluoride(in) = fluoride(out). With respect to regulation, na(+) is not transported, but it plays an essential structural role and its presence is essential for fluoride channel function. Functionally, fluoride-specific ion channel. Important for reducing fluoride concentration in the cell, thus reducing its toxicity. This Chlorobium phaeobacteroides (strain BS1) protein is Fluoride-specific ion channel FluC.